A 247-amino-acid polypeptide reads, in one-letter code: Carboxy-S-adenosyl-L-methionine synthase (247 aa).

Residues tyrosine 39, 64 to 66 (GCS), 89 to 90 (DN), 117 to 118 (DI), asparagine 132, and arginine 199 each bind S-adenosyl-L-methionine.

The protein belongs to the class I-like SAM-binding methyltransferase superfamily. Cx-SAM synthase family. In terms of assembly, homodimer.

It carries out the reaction prephenate + S-adenosyl-L-methionine = carboxy-S-adenosyl-L-methionine + 3-phenylpyruvate + H2O. Functionally, catalyzes the conversion of S-adenosyl-L-methionine (SAM) to carboxy-S-adenosyl-L-methionine (Cx-SAM). The polypeptide is Carboxy-S-adenosyl-L-methionine synthase (Citrobacter koseri (strain ATCC BAA-895 / CDC 4225-83 / SGSC4696)).